Here is a 348-residue protein sequence, read N- to C-terminus: Succinoglycan biosynthesis protein ExoO (348 aa).

The interval H322–G348 is disordered. Residues A324 to A334 are compositionally biased toward low complexity.

The protein belongs to the glycosyltransferase 2 family.

It is found in the cytoplasm. Its pathway is glycan metabolism; exopolysaccharide biosynthesis. In terms of biological role, glycosyltransferase required for the synthesis of succinoglycan (EPS I). Needed for the addition of the fifth sugar (glucose), catalyzes the formation of a beta-1,6 linkage between the fourth and fifth sugar. This Rhizobium meliloti (strain 1021) (Ensifer meliloti) protein is Succinoglycan biosynthesis protein ExoO (exoO).